The chain runs to 377 residues: MFRRGGRILNRRIFGAGISAFRVQGRKCASDLSKALASGPKFSDFLKGDKEEQLKPEEAYELEENVVLPNGSVHKRLPSWLKTKVPLGTNFNKIKNDLRGLNLHTVCEEARCPNMGECWGGKDKTRATATIMLMGDTCTRGCRFCSIKTSRKPPPLDPNEPEKTAEAIKRWGLGYVVLTSVDRDDLADAGASHIAKTISLIKSKAPQVLVEALTPDFSGNLDLVSHVAKSGLDVFAHNVETVEELTPFVRDRRANFRQSLRVLKHAKSVSPHLITKTSIMLGLGETDEEIEATLGELRKNEVDVVTFGQYMRPTKRHMKVQAYITPDKFEHWRKRAEELGFLYVASGPLVRSSYKAGEFYLTNILRRRTAAKAQADH.

The transit peptide at 1–77 directs the protein to the mitochondrion; the sequence is MFRRGGRILN…LPNGSVHKRL (77 aa). Positions 107, 112, 118, 138, 142, 145, and 353 each coordinate [4Fe-4S] cluster. One can recognise a Radical SAM core domain in the interval 123–342; sequence DKTRATATIM…RKRAEELGFL (220 aa).

It belongs to the radical SAM superfamily. Lipoyl synthase family. [4Fe-4S] cluster is required as a cofactor.

It is found in the mitochondrion. It catalyses the reaction [[Fe-S] cluster scaffold protein carrying a second [4Fe-4S](2+) cluster] + N(6)-octanoyl-L-lysyl-[protein] + 2 oxidized [2Fe-2S]-[ferredoxin] + 2 S-adenosyl-L-methionine + 4 H(+) = [[Fe-S] cluster scaffold protein] + N(6)-[(R)-dihydrolipoyl]-L-lysyl-[protein] + 4 Fe(3+) + 2 hydrogen sulfide + 2 5'-deoxyadenosine + 2 L-methionine + 2 reduced [2Fe-2S]-[ferredoxin]. The protein operates within protein modification; protein lipoylation via endogenous pathway; protein N(6)-(lipoyl)lysine from octanoyl-[acyl-carrier-protein]: step 2/2. Its function is as follows. Catalyzes the radical-mediated insertion of two sulfur atoms into the C-6 and C-8 positions of the octanoyl moiety bound to the lipoyl domains of lipoate-dependent enzymes, thereby converting the octanoylated domains into lipoylated derivatives. The polypeptide is Lipoyl synthase, mitochondrial (Schizosaccharomyces japonicus (strain yFS275 / FY16936) (Fission yeast)).